Reading from the N-terminus, the 110-residue chain is Small ribosomal subunit protein eS25 (110 aa).

Positions 1–39 (MPPKAAGGKSKQIQASKAAAKGSSGGAGRKKWSKGRSRE) are disordered.

The protein belongs to the eukaryotic ribosomal protein eS25 family.

The polypeptide is Small ribosomal subunit protein eS25 (rps25) (Dictyostelium discoideum (Social amoeba)).